A 450-amino-acid polypeptide reads, in one-letter code: Tubulin alpha chain (450 aa).

Q11 lines the GTP pocket. The residue at position 40 (K40) is an N6-acetyllysine. Residues E71, S140, G144, T145, T179, N206, and N228 each contribute to the GTP site. Residue E71 coordinates Mg(2+). E254 is a catalytic residue.

The protein belongs to the tubulin family. Dimer of alpha and beta chains. A typical microtubule is a hollow water-filled tube with an outer diameter of 25 nm and an inner diameter of 15 nM. Alpha-beta heterodimers associate head-to-tail to form protofilaments running lengthwise along the microtubule wall with the beta-tubulin subunit facing the microtubule plus end conferring a structural polarity. Microtubules usually have 13 protofilaments but different protofilament numbers can be found in some organisms and specialized cells. Mg(2+) serves as cofactor. Undergoes a tyrosination/detyrosination cycle, the cyclic removal and re-addition of a C-terminal tyrosine residue by the enzymes tubulin tyrosine carboxypeptidase (TTCP) and tubulin tyrosine ligase (TTL), respectively. Post-translationally, acetylation of alpha chains at Lys-40 stabilizes microtubules and affects affinity and processivity of microtubule motors. This modification has a role in multiple cellular functions, ranging from cell motility, cell cycle progression or cell differentiation to intracellular trafficking and signaling.

It is found in the cytoplasm. The protein resides in the cytoskeleton. The catalysed reaction is GTP + H2O = GDP + phosphate + H(+). In terms of biological role, tubulin is the major constituent of microtubules, a cylinder consisting of laterally associated linear protofilaments composed of alpha- and beta-tubulin heterodimers. Microtubules grow by the addition of GTP-tubulin dimers to the microtubule end, where a stabilizing cap forms. Below the cap, tubulin dimers are in GDP-bound state, owing to GTPase activity of alpha-tubulin. The sequence is that of Tubulin alpha chain from Haemonchus contortus (Barber pole worm).